The primary structure comprises 306 residues: Acetyl-coenzyme A carboxylase carboxyl transferase subunit beta (306 aa).

Positions 25–294 constitute a CoA carboxyltransferase N-terminal domain; that stretch reads LWIKDPTSGE…AVNPSNPSPT (270 aa). The interval 286–306 is disordered; that stretch reads VNPSNPSPTDSQPPLSKAEAA. The segment covering 287–299 has biased composition (polar residues); that stretch reads NPSNPSPTDSQPP.

The protein belongs to the AccD/PCCB family. In terms of assembly, acetyl-CoA carboxylase is a heterohexamer composed of biotin carboxyl carrier protein (AccB), biotin carboxylase (AccC) and two subunits each of ACCase subunit alpha (AccA) and ACCase subunit beta (AccD).

The protein localises to the cytoplasm. The catalysed reaction is N(6)-carboxybiotinyl-L-lysyl-[protein] + acetyl-CoA = N(6)-biotinyl-L-lysyl-[protein] + malonyl-CoA. It participates in lipid metabolism; malonyl-CoA biosynthesis; malonyl-CoA from acetyl-CoA: step 1/1. Its function is as follows. Component of the acetyl coenzyme A carboxylase (ACC) complex. Biotin carboxylase (BC) catalyzes the carboxylation of biotin on its carrier protein (BCCP) and then the CO(2) group is transferred by the transcarboxylase to acetyl-CoA to form malonyl-CoA. In Bartonella quintana (strain Toulouse) (Rochalimaea quintana), this protein is Acetyl-coenzyme A carboxylase carboxyl transferase subunit beta.